We begin with the raw amino-acid sequence, 333 residues long: Anthranilate phosphoribosyltransferase (333 aa).

5-phospho-alpha-D-ribose 1-diphosphate is bound by residues Gly-81, 84 to 85 (GD), Thr-89, 91 to 94 (NIST), 109 to 117 (KHGNRSVSS), and Ala-121. Residue Gly-81 participates in anthranilate binding. Ser-93 contributes to the Mg(2+) binding site. Asn-112 provides a ligand contact to anthranilate. Arg-167 contributes to the anthranilate binding site. Mg(2+) contacts are provided by Asp-225 and Glu-226.

The protein belongs to the anthranilate phosphoribosyltransferase family. Homodimer. The cofactor is Mg(2+).

It carries out the reaction N-(5-phospho-beta-D-ribosyl)anthranilate + diphosphate = 5-phospho-alpha-D-ribose 1-diphosphate + anthranilate. It participates in amino-acid biosynthesis; L-tryptophan biosynthesis; L-tryptophan from chorismate: step 2/5. Functionally, catalyzes the transfer of the phosphoribosyl group of 5-phosphorylribose-1-pyrophosphate (PRPP) to anthranilate to yield N-(5'-phosphoribosyl)-anthranilate (PRA). The protein is Anthranilate phosphoribosyltransferase of Actinobacillus succinogenes (strain ATCC 55618 / DSM 22257 / CCUG 43843 / 130Z).